A 198-amino-acid polypeptide reads, in one-letter code: MERLTGRNVALLVLCLCAGYALVFAEGEKEIPVTKFGQNIAPTMTFLYCYSCGYRKAFEDYVGLLGEKYPQIQVNGGNYDPPGLNYYLSKMIFALKIIIIVSVVSAVSPFTFLGLNTPSWWSHMQANKIYACMMIFFLGNMLEAQLISSGAFEITLNDVPVWSKLQTGRFPSPEVLFQIIDNHLQFTEKVQENPDFVK.

The first 25 residues, 1 to 25 (MERLTGRNVALLVLCLCAGYALVFA), serve as a signal peptide directing secretion. An intrachain disulfide couples Cys-49 to Cys-52.

This sequence belongs to the SelWTH family. SELT subfamily.

It catalyses the reaction [thioredoxin]-dithiol + NADP(+) = [thioredoxin]-disulfide + NADPH + H(+). Probably has thioredoxin reductase-like oxidoreductase activity. This is Thioredoxin reductase-like selenoprotein T homolog CG3887 from Drosophila melanogaster (Fruit fly).